Here is a 151-residue protein sequence, read N- to C-terminus: Large ribosomal subunit protein uL13 (151 aa).

Belongs to the universal ribosomal protein uL13 family. As to quaternary structure, part of the 50S ribosomal subunit.

Its function is as follows. This protein is one of the early assembly proteins of the 50S ribosomal subunit, although it is not seen to bind rRNA by itself. It is important during the early stages of 50S assembly. In Rippkaea orientalis (strain PCC 8801 / RF-1) (Cyanothece sp. (strain PCC 8801)), this protein is Large ribosomal subunit protein uL13.